The primary structure comprises 535 residues: Reticuline oxidase (535 aa).

The first 23 residues, 1–23 (MMCRSLTLRFFLFIVLLQTCVRG), serve as a signal peptide directing secretion. Residue asparagine 42 is glycosylated (N-linked (GlcNAc...) asparagine). The FAD-binding PCMH-type domain occupies 71-245 (TVSKPSFIVM…YAWKIKLLPV (175 aa)). Residues 108 to 170 (HSYEGLSYTA…DTLGFTAGWC (63 aa)) constitute a cross-link (6-(S-cysteinyl)-8alpha-(pros-histidyl)-FAD (His-Cys)). An N-linked (GlcNAc...) asparagine glycan is attached at asparagine 475.

It belongs to the oxygen-dependent FAD-linked oxidoreductase family. The cofactor is FAD. Requires a metal cation as cofactor. The FAD cofactor is bound via a bicovalent 6-S-cysteinyl, 8alpha-N1-histidyl FAD linkage. In terms of tissue distribution, expressed in roots and stems. Not detected in leaves or reproductive organs. Restricted to the parietal region of sieve elements adjacent or proximal to laticifers.

The protein resides in the cytoplasmic vesicle. The enzyme catalyses (S)-reticuline + O2 = (S)-scoulerine + H2O2 + H(+). Its pathway is alkaloid biosynthesis; (S)-scoulerine biosynthesis; (S)-scoulerine from (S)-reticuline: step 1/1. In terms of biological role, oxygen-dependent FAD-dependent oxidoreductase essential to the formation of benzophenanthridine alkaloids in the response of plants to pathogenic attack. Catalyzes the stereospecific conversion of the N-methyl moiety of (S)-reticuline into the berberine bridge carbon of (S)-scoulerine. Involved in the biosynthesis of sanguinarine. The chain is Reticuline oxidase (BBE1) from Papaver somniferum (Opium poppy).